The following is a 363-amino-acid chain: Pyrimidine monooxygenase RutA (363 aa).

Residues 49 to 50 (IK), Asn115, Glu124, 140 to 141 (RY), and Ser190 contribute to the FMN site.

This sequence belongs to the NtaA/SnaA/DszA monooxygenase family. RutA subfamily.

The enzyme catalyses uracil + FMNH2 + NADH + O2 = (Z)-3-ureidoacrylate + FMN + NAD(+) + H2O + H(+). The catalysed reaction is thymine + FMNH2 + NADH + O2 = (Z)-2-methylureidoacrylate + FMN + NAD(+) + H2O + H(+). Functionally, catalyzes the pyrimidine ring opening between N-3 and C-4 by an unusual flavin hydroperoxide-catalyzed mechanism, adding oxygen atoms in the process to yield ureidoacrylate peracid, that immediately reacts with FMN forming ureidoacrylate and FMN-N(5)-oxide. The FMN-N(5)-oxide reacts spontaneously with NADH to produce FMN. Requires the flavin reductase RutF to regenerate FMN in vivo. The sequence is that of Pyrimidine monooxygenase RutA from Escherichia coli O103:H2 (strain 12009 / EHEC).